We begin with the raw amino-acid sequence, 511 residues long: GMP synthase [glutamine-hydrolyzing] (511 aa).

A Glutamine amidotransferase type-1 domain is found at 5 to 195; the sequence is DILVLDFGSQ…AKYACNCESV (191 aa). Cys82 acts as the Nucleophile in catalysis. Residues His169 and Glu171 contribute to the active site. In terms of domain architecture, GMPS ATP-PPase spans 196-386; the sequence is WNMGSFAKTQ…LGLSKEVVYR (191 aa). An ATP-binding site is contributed by 223–229; sequence SGGVDSS.

As to quaternary structure, homodimer.

The enzyme catalyses XMP + L-glutamine + ATP + H2O = GMP + L-glutamate + AMP + diphosphate + 2 H(+). Its pathway is purine metabolism; GMP biosynthesis; GMP from XMP (L-Gln route): step 1/1. Its function is as follows. Catalyzes the synthesis of GMP from XMP. The protein is GMP synthase [glutamine-hydrolyzing] of Campylobacter jejuni (strain RM1221).